A 676-amino-acid chain; its full sequence is Protein timeless (676 aa).

Positions 77–108 (VNTLQKLLNLWFEASLSESSEDNESNTSPPKK) are necessary for normal circadian rhythm. Disordered regions lie at residues 94–145 (ESSE…CDER) and 346–398 (PESI…LVKR). 2 stretches are compositionally biased toward low complexity: residues 101 to 129 (SNTS…SDNG) and 360 to 369 (QGKPQHQKPP). Residues 388–398 (KELRRKKLVKR) carry the Nuclear localization signal motif.

This sequence belongs to the timeless family. Forms a heterodimer with period (PER); the complex then translocates into the nucleus. In terms of processing, phosphorylated with a circadian rhythmicity.

The protein resides in the nucleus. The protein localises to the cytoplasm. It localises to the perinuclear region. Its function is as follows. Required for the production of circadian rhythms. The biological cycle depends on the rhythmic formation and nuclear localization of the TIM-PER complex. Light induces the degradation of TIM, which promotes elimination of PER. Nuclear activity of the heterodimer coordinatively regulates PER and TIM transcription through a negative feedback loop. Behaves as a negative element in circadian transcriptional loop. Does not appear to bind DNA, suggesting indirect transcriptional inhibition. This is Protein timeless (tim) from Drosophila hydei (Fruit fly).